Reading from the N-terminus, the 164-residue chain is Cyclic pyranopterin monophosphate synthase (164 aa).

Substrate is bound by residues Met-75–His-77 and Met-116–Glu-117. The active site involves Asp-131.

The protein belongs to the MoaC family. As to quaternary structure, homohexamer; trimer of dimers.

The enzyme catalyses (8S)-3',8-cyclo-7,8-dihydroguanosine 5'-triphosphate = cyclic pyranopterin phosphate + diphosphate. Its pathway is cofactor biosynthesis; molybdopterin biosynthesis. Its function is as follows. Catalyzes the conversion of (8S)-3',8-cyclo-7,8-dihydroguanosine 5'-triphosphate to cyclic pyranopterin monophosphate (cPMP). This Staphylococcus aureus (strain Mu3 / ATCC 700698) protein is Cyclic pyranopterin monophosphate synthase.